We begin with the raw amino-acid sequence, 239 residues long: MIKVLIVDDEPLARENLRILLQGQDDIEIVGECANAVEAIGAVHKLRPDVLFLDIQMPRISGLEIVGMLDPEHRPYIVFLTAFDEYAIKAFEEHAFDYLLKPIEEKRLEKTLHRLRQERSKQDVSLLPENQQALKFIPCTGHSRIYLLQMDDVAFVSSRMSGVYVTSSEGKEGFTELTLRTLESRTPLLRCHRQFLVNMAHLQEIRLEDNGQAELILRNGLTVPVSRRYLKSLKEAIGL.

In terms of domain architecture, Response regulatory spans 3 to 116 (KVLIVDDEPL…RLEKTLHRLR (114 aa)). At D54 the chain carries 4-aspartylphosphate. The HTH LytTR-type domain occupies 137-239 (IPCTGHSRIY…LKSLKEAIGL (103 aa)).

Phosphorylated by BtsS.

Functionally, member of the two-component regulatory system BtsS/BtsR. BtsR regulates expression of btsT by binding to its promoter region. The polypeptide is Transcriptional regulatory protein BtsR (Salmonella typhi).